A 226-amino-acid chain; its full sequence is Orotate phosphoribosyltransferase 1 (226 aa).

K30 contributes to the 5-phospho-alpha-D-ribose 1-diphosphate binding site. 38 to 39 is an orotate binding site; it reads FF. 5-phospho-alpha-D-ribose 1-diphosphate contacts are provided by residues 76–77, R106, K107, K110, H112, and 132–140; these read YK and DDVMTAGTA. Positions 136 and 164 each coordinate orotate. Phosphoserine occurs at positions 213 and 225.

This sequence belongs to the purine/pyrimidine phosphoribosyltransferase family. PyrE subfamily. In terms of assembly, homodimer.

The catalysed reaction is orotidine 5'-phosphate + diphosphate = orotate + 5-phospho-alpha-D-ribose 1-diphosphate. The protein operates within pyrimidine metabolism; UMP biosynthesis via de novo pathway; UMP from orotate: step 1/2. Catalyzes the transfer of a ribosyl phosphate group from 5-phosphoribose 1-diphosphate to orotate, leading to the formation of orotidine monophosphate (OMP). This chain is Orotate phosphoribosyltransferase 1 (URA5), found in Saccharomyces cerevisiae (strain ATCC 204508 / S288c) (Baker's yeast).